The sequence spans 520 residues: Glucose-6-phosphate isomerase (520 aa).

The active-site Proton donor is the Glu327. Active-site residues include His358 and Lys486.

Belongs to the GPI family.

The protein resides in the cytoplasm. The catalysed reaction is alpha-D-glucose 6-phosphate = beta-D-fructose 6-phosphate. Its pathway is carbohydrate biosynthesis; gluconeogenesis. The protein operates within carbohydrate degradation; glycolysis; D-glyceraldehyde 3-phosphate and glycerone phosphate from D-glucose: step 2/4. Functionally, catalyzes the reversible isomerization of glucose-6-phosphate to fructose-6-phosphate. The sequence is that of Glucose-6-phosphate isomerase from Bordetella avium (strain 197N).